A 118-amino-acid polypeptide reads, in one-letter code: UPF0342 protein BT9727_0768 (118 aa).

It belongs to the UPF0342 family.

The chain is UPF0342 protein BT9727_0768 from Bacillus thuringiensis subsp. konkukian (strain 97-27).